Consider the following 457-residue polypeptide: MLFWHTQPEHYNQHNSGSYLRDVLALPIFKQEEPQLSPENEARLPPLQYVLCAATSPAVKLHEETLTYLNQGQSYEIRLLENRKLGDFQDLNTKYVKSIIRVVFNDRRLQYTEHQQLEGWRWSRPGDRILDIDIPLSVGILDPRASPTQLNAVEFLWDPAKRASAFIQVHCISTEFTPRKHGGEKGVPFRVQIDTFKQNENGEYTEHLHSASCQIKVFKPKGADRKQETDREKMEKRTAQEKEKYQPSYETTILTECSPWPDVAYQVNSAPSPSYNGSPNSFGLGEGNASPTHPVEALPVGSDHLLPSASIQDAQQWLHRNRFSQFCRLFASFSGADLLKMSRDDLVQICGPADGIRLFNAIKGRNVRPKMTIYVCQELEQNRVPLQQKRDGSGDSNLCVYHAIFLEELTTLDLIEKIANLYSISPQHIHRVYRQGPTGIHVVVSNELRAMTATTSS.

Residues 1–52 are mediate transcriptional repression; sequence MLFWHTQPEHYNQHNSGSYLRDVLALPIFKQEEPQLSPENEARLPPLQYVLC. A Grh/CP2 DB domain is found at 43-280; it reads RLPPLQYVLC…PSPSYNGSPN (238 aa). Disordered stretches follow at residues 219-245 and 271-301; these read KPKGADRKQETDREKMEKRTAQEKEKY and PSPSYNGSPNSFGLGEGNASPTHPVEALPVG. Over residues 221-245 the composition is skewed to basic and acidic residues; the sequence is KGADRKQETDREKMEKRTAQEKEKY. The segment at 261 to 365 is SAM2-like domain; that stretch reads PDVAYQVNSA…IRLFNAIKGR (105 aa). Positions 271–281 are enriched in polar residues; that stretch reads PSPSYNGSPNS.

Belongs to the grh/CP2 family. CP2 subfamily. In terms of assembly, forms homohexamers via its SAM-like domain. Interacts with MTA1; which is indispensable for TFCP2L1-mediated self-renewal-promoting effect and endoderm-inhibiting action.

It is found in the nucleus. Its function is as follows. Transcription factor that facilitates establishment and maintenance of pluripotency in embryonic stem cells (ESCs). With KLF2, acts as the major effector of self-renewal that mediates induction of pluripotency downstream of LIF/STAT3 and Wnt/beta-catenin signaling. Required for normal duct development in the salivary gland and kidney. Coordinates the development of the kidney collecting ducts intercalated (IC) and principal (PC) cells, which regulate acid-base and salt-water homeostasis, respectively. Regulates the expression of IC genes including subunits B1 and D2 of the V-ATPase complex, OXGR1, CA12, SLC4A1, AQP6 and IC-specific transcription factor FOXI1. Also regulates the expression of JAG1 and subsequent notch signaling in the collecting duct. JAG1 initiates notch signaling in PCs but inhibits notch signaling in ICs. Acts as a transcriptional suppressor that may suppress UBP1-mediated transcriptional activation. Modulates the placental expression of CYP11A1. In Pongo abelii (Sumatran orangutan), this protein is Transcription factor CP2-like protein 1 (TFCP2L1).